A 212-amino-acid polypeptide reads, in one-letter code: WAP four-disulfide core domain protein 1 (212 aa).

The first 26 residues, 1-26 (MGSCDRKALWALSFLLLLLGSSSVQG), serve as a signal peptide directing secretion. The interval 43 to 62 (EEVAATGSRQPHADRCPPPP) is disordered. The WAP domain maps to 51–100 (RQPHADRCPPPPRTLPPGACQATRCQSDSECPRHRRCCYNGCAYACLEAV). Disulfide bonds link cysteine 58–cysteine 88, cysteine 70–cysteine 92, cysteine 75–cysteine 87, and cysteine 81–cysteine 96. The tract at residues 191–212 (EYPEGDSKYVAEPGKGQQRHFP) is disordered.

In terms of tissue distribution, vascular smooth muscle and prostate. Periacinar ring.

The protein localises to the secreted. In terms of biological role, has growth inhibitory activity. The polypeptide is WAP four-disulfide core domain protein 1 (Wfdc1) (Rattus norvegicus (Rat)).